Reading from the N-terminus, the 252-residue chain is MSSSAHLQDAPPLLSGTLTQNEGQTSLRQSSSCGPSAASASESLSGYTESRIPHSKVRQGKGLRSIFPESRVKRYCCYGGVITVVAIAIVVPLSVTLSVKQMEQTSINNTSAASINNTSAASINNTSAACPSNWTEYGNKCFYFSEYTSNWTFSKDFCAAQGAELARFDTEEELNFLKRYKGSSGYWIGLHRESSEHPWKWTDNTQYNNLIPIRGDGQCGFLSDQLNISSSRVYVERPWICSKPKKYISQSQ.

A disordered region spans residues 1–58 (MSSSAHLQDAPPLLSGTLTQNEGQTSLRQSSSCGPSAASASESLSGYTESRIPHSKVR). Residues 1 to 78 (MSSSAHLQDA…ESRVKRYCCY (78 aa)) lie on the Cytoplasmic side of the membrane. Positions 16–29 (GTLTQNEGQTSLRQ) are enriched in polar residues. A compositionally biased stretch (low complexity) spans 30 to 43 (SSSCGPSAASASES). A helical; Signal-anchor for type II membrane protein transmembrane segment spans residues 79-99 (GGVITVVAIAIVVPLSVTLSV). The Extracellular portion of the chain corresponds to 100–252 (KQMEQTSINN…KPKKYISQSQ (153 aa)). The C-type lectin domain maps to 137–242 (YGNKCFYFSE…VYVERPWICS (106 aa)). N-linked (GlcNAc...) asparagine glycosylation occurs at asparagine 150. A disulfide bond links cysteine 158 and cysteine 241.

The protein resides in the cell membrane. In terms of biological role, lectin-type cell surface receptor. This is C-type lectin domain family 2 member D3 (Clec2d3) from Rattus norvegicus (Rat).